Reading from the N-terminus, the 303-residue chain is Terpene synthase (303 aa).

Mg(2+)-binding residues include Asp69 and Asp73. Residues 69–73 (DDIQD) carry the DDXXD motif motif.

The protein belongs to the FPP/GGPP synthase family. It depends on Mg(2+) as a cofactor.

The enzyme catalyses (2E)-geranyl diphosphate + H2O = (2E)-geraniol + diphosphate. In terms of biological role, terpene synthase that is able to convert geraniol diphosphate to geraniol in tea leaves. This Matsumurasca onukii (Tea green leafhopper) protein is Terpene synthase.